The following is a 681-amino-acid chain: Cobalamin-dependent radical SAM methyltransferase TokK (681 aa).

Residues 1–144 (MSAELASRGR…ATRLSDHPDY (144 aa)) form the B12-binding domain. Positions 18, 72, 74, 75, 103, 126, and 127 each coordinate cob(II)alamin. A Radical SAM core domain is found at 192-417 (RGLRFYALWE…RMYVERPGTP (226 aa)). [4Fe-4S] cluster contacts are provided by Cys-206 and Cys-210. Phe-212 lines the 5'-deoxyadenosine pocket. Residue Cys-213 coordinates [4Fe-4S] cluster. Asp-214 and Cys-249 together coordinate cob(II)alamin. The 5'-deoxyadenosine site is built by Gln-312, Glu-349, and Gly-384.

This sequence belongs to the methyltransferase superfamily. [4Fe-4S] cluster serves as cofactor. The cofactor is cob(II)alamin.

The protein operates within antibiotic biosynthesis. Its function is as follows. Methyltransferase involved in the biosynthesis of the beta-lactam carbapenem antibiotic asparenomycin. Catalyzes three consecutive S-adenosyl-L-methionine-dependent methylations to build out the C6-isopropyl side chain in a stereocontrolled manner. This is Cobalamin-dependent radical SAM methyltransferase TokK from Streptomyces tokunonensis.